Here is a 272-residue protein sequence, read N- to C-terminus: Ribosomal RNA small subunit methyltransferase A (272 aa).

S-adenosyl-L-methionine-binding residues include His10, Leu12, Gly37, Glu57, Asp82, and Asn98.

It belongs to the class I-like SAM-binding methyltransferase superfamily. rRNA adenine N(6)-methyltransferase family. RsmA subfamily.

The protein resides in the cytoplasm. It carries out the reaction adenosine(1518)/adenosine(1519) in 16S rRNA + 4 S-adenosyl-L-methionine = N(6)-dimethyladenosine(1518)/N(6)-dimethyladenosine(1519) in 16S rRNA + 4 S-adenosyl-L-homocysteine + 4 H(+). In terms of biological role, specifically dimethylates two adjacent adenosines (A1518 and A1519) in the loop of a conserved hairpin near the 3'-end of 16S rRNA in the 30S particle. May play a critical role in biogenesis of 30S subunits. This chain is Ribosomal RNA small subunit methyltransferase A, found in Gloeobacter violaceus (strain ATCC 29082 / PCC 7421).